The primary structure comprises 126 residues: Urease subunit beta (126 aa).

Belongs to the urease beta subunit family. Heterotrimer of UreA (gamma), UreB (beta) and UreC (alpha) subunits. Three heterotrimers associate to form the active enzyme.

It localises to the cytoplasm. The catalysed reaction is urea + 2 H2O + H(+) = hydrogencarbonate + 2 NH4(+). It functions in the pathway nitrogen metabolism; urea degradation; CO(2) and NH(3) from urea (urease route): step 1/1. The protein is Urease subunit beta of Frankia casuarinae (strain DSM 45818 / CECT 9043 / HFP020203 / CcI3).